A 317-amino-acid polypeptide reads, in one-letter code: Lysosomal-associated transmembrane protein 4B (317 aa).

Residues 25–73 (AFGAKGTDPAEARSSRGIEEAGPRAHGRAGREPERRRSRQQRRGGLQAR) form a disordered region. The segment covering 32 to 59 (DPAEARSSRGIEEAGPRAHGRAGREPER) has biased composition (basic and acidic residues). A run of 4 helical transmembrane segments spans residues 117 to 137 (ILLG…LLSA), 163 to 183 (MCIA…ATYG), 191 to 211 (WIIP…LVAI), and 244 to 264 (CLVL…GYLI). The required for NEDD4 interaction stretch occupies residues 205–221 (LNMLVAITVLIYPNSIQ).

The protein belongs to the LAPTM4/LAPTM5 transporter family. In terms of assembly, homooligomer; upon reaching the lysosomes. Interacts with MCOLN1. Interacts with NEDD4; may play a role in the lysosomal sorting of LAPTM4B; enhances HGS association with NEDD4; mediates inhibition of EGFR degradation. Interacts with PIP5K1C; promotes SNX5 association with LAPTM4B; kinase activity of PIP5K1C is required; interaction is regulated by phosphatidylinositol 4,5-bisphosphate generated by PIP5K1C. Interacts with HGS; promotes HGS ubiquitination. Interacts with SNX5. Interacts with SLC3A2 and SLC7A5; recruits SLC3A2 and SLC7A5 to lysosomes to promote leucine uptake into these organelles and is required for mTORC1 activation. Interacts with LRRC32; decreases TGFB1 production in regulatory T cells. Interacts with BECN1; competes with EGFR for LAPTM4B binding; regulates EGFR activity. Interacts with EGFR; positively correlates with EGFR activation. In terms of processing, undergoes proteolytic cleavage following delivery to the lysosomes. Ubiquitinated by NEDD4.

It localises to the endomembrane system. The protein resides in the late endosome membrane. Its subcellular location is the cell membrane. It is found in the cell projection. The protein localises to the lysosome membrane. It localises to the endosome membrane. The protein resides in the endosome. Its subcellular location is the multivesicular body membrane. It is found in the multivesicular body lumen. In terms of biological role, required for optimal lysosomal function. Blocks EGF-stimulated EGFR intraluminal sorting and degradation. Conversely by binding with the phosphatidylinositol 4,5-bisphosphate, regulates its PIP5K1C interaction, inhibits HGS ubiquitination and relieves LAPTM4B inhibition of EGFR degradation. Recruits SLC3A2 and SLC7A5 (the Leu transporter) to the lysosome, promoting entry of leucine and other essential amino acid (EAA) into the lysosome, stimulating activation of proton-transporting vacuolar (V)-ATPase protein pump (V-ATPase) and hence mTORC1 activation. Plays a role as negative regulator of TGFB1 production in regulatory T cells. Binds ceramide and facilitates its exit from late endosome in order to control cell death pathways. This Homo sapiens (Human) protein is Lysosomal-associated transmembrane protein 4B.